A 423-amino-acid polypeptide reads, in one-letter code: MGEEREATRTEYKLEMDSELRFEIENKNEKVTVTLMNGHAELFGTELVMRKPYEFGVGAKVAIFTYHGCTIELRGKPDVAYVARETPMVQYLNSNSALEHLRAKAEQDDTQGPVVMIVGPMDVGKTTLCRIFLNYAVRLGRRPIYVDLDVGQGGIAIPGTIGALLVERPAPVAEGFSQQAPLVYHFGHTSPSDNDVFYGVLISKLAETTLERLEANKKAKYSGMIINTCGWVKGGGYRHILHAIKAFEVNAVFVLDQERLYNELLRDVERAVQIVFLPKSGGVVERTKSQRAEARDNRVREYFYGSKMPLYPHSFDVKFSDVKIFKVGSPALPDSCLPLGMKREDNYTKLVAVQPGPQLLHHILAVSFAESTDDNVIQSNVAGFICVTNVSMEKEVLTILSPQPRPLPQTILLVSDFQFMDSH.

Residues glutamate 19, lysine 60, and 122–127 contribute to the ATP site; that span reads DVGKTT.

It belongs to the Clp1 family. Clp1 subfamily.

The protein localises to the nucleus. Functionally, required for endonucleolytic cleavage during polyadenylation-dependent pre-mRNA 3'-end formation. The chain is Protein CLP1 homolog (cbc) from Culex quinquefasciatus (Southern house mosquito).